The following is a 164-amino-acid chain: Ribosome maturation factor RimP (164 aa).

The protein belongs to the RimP family.

The protein resides in the cytoplasm. Its function is as follows. Required for maturation of 30S ribosomal subunits. The chain is Ribosome maturation factor RimP from Mycoplasma mycoides subsp. mycoides SC (strain CCUG 32753 / NCTC 10114 / PG1).